We begin with the raw amino-acid sequence, 152 residues long: CASP-like protein 5C3 (152 aa).

The Cytoplasmic segment spans residues 1–17; that stretch reads MVEVPGSVGTTASLSLR. The helical transmembrane segment at 18–38 threads the bilayer; that stretch reads LGQMVLAFGSLLFMTIGVRFY. Residues 39–42 are Extracellular-facing; the sequence is QFTA. A helical transmembrane segment spans residues 43-63; that stretch reads FCYLVTIMSLAIPWNLTLAMV. Residues 64–78 lie on the Cytoplasmic side of the membrane; sequence DIYCVILQQPFQKPR. Residues 79 to 99 traverse the membrane as a helical segment; that stretch reads ILLAISIGDWVVSVLALASAS. Residues 100–128 lie on the Extracellular side of the membrane; it reads SAASVVDILRSNESSCPPTICNRYQFAAT. N-linked (GlcNAc...) asparagine glycosylation is present at asparagine 111. A helical membrane pass occupies residues 129–149; that stretch reads LAFLTWFLSLSSSLFNLWLLP. Over 150–152 the chain is Cytoplasmic; the sequence is SLI.

The protein belongs to the Casparian strip membrane proteins (CASP) family. In terms of assembly, homodimer and heterodimers. As to expression, expressed in the floral organ abscission zone and flower buds.

The protein resides in the cell membrane. This is CASP-like protein 5C3 from Arabidopsis thaliana (Mouse-ear cress).